The chain runs to 479 residues: Membrane-bound lytic murein transglycosylase F (479 aa).

The N-terminal stretch at 1-15 is a signal peptide; that stretch reads MKRLLLVLCYITLLA. The tract at residues 16–258 is non-LT domain; sequence GCQKVVVEQE…HLNEKYFAHV (243 aa). The LT domain stretch occupies residues 260–479; that stretch reads RFDYVDTRAF…QTDAIQPQQP (220 aa). Glu303 is an active-site residue. The disordered stretch occupies residues 457–479; the sequence is LQTAEAKETEEKPQTDAIQPQQP. Over residues 461–470 the composition is skewed to basic and acidic residues; the sequence is EAKETEEKPQ.

This sequence in the N-terminal section; belongs to the bacterial solute-binding protein 3 family. The protein in the C-terminal section; belongs to the transglycosylase Slt family.

Its subcellular location is the cell outer membrane. It catalyses the reaction Exolytic cleavage of the (1-&gt;4)-beta-glycosidic linkage between N-acetylmuramic acid (MurNAc) and N-acetylglucosamine (GlcNAc) residues in peptidoglycan, from either the reducing or the non-reducing ends of the peptidoglycan chains, with concomitant formation of a 1,6-anhydrobond in the MurNAc residue.. Its function is as follows. Murein-degrading enzyme that degrades murein glycan strands and insoluble, high-molecular weight murein sacculi, with the concomitant formation of a 1,6-anhydromuramoyl product. Lytic transglycosylases (LTs) play an integral role in the metabolism of the peptidoglycan (PG) sacculus. Their lytic action creates space within the PG sacculus to allow for its expansion as well as for the insertion of various structures such as secretion systems and flagella. The sequence is that of Membrane-bound lytic murein transglycosylase F from Shewanella pealeana (strain ATCC 700345 / ANG-SQ1).